A 332-amino-acid chain; its full sequence is Glycerol-3-phosphate dehydrogenase [NAD(P)+] (332 aa).

NADPH contacts are provided by Ser14, Trp15, Arg35, and Lys107. Sn-glycerol 3-phosphate is bound by residues Lys107, Gly137, and Ser139. Ala141 is an NADPH binding site. Lys192, Asp245, Ser255, Arg256, and Asn257 together coordinate sn-glycerol 3-phosphate. Lys192 serves as the catalytic Proton acceptor. NADPH is bound at residue Arg256. NADPH contacts are provided by Val280 and Glu282.

Belongs to the NAD-dependent glycerol-3-phosphate dehydrogenase family.

The protein resides in the cytoplasm. It catalyses the reaction sn-glycerol 3-phosphate + NAD(+) = dihydroxyacetone phosphate + NADH + H(+). The enzyme catalyses sn-glycerol 3-phosphate + NADP(+) = dihydroxyacetone phosphate + NADPH + H(+). It functions in the pathway membrane lipid metabolism; glycerophospholipid metabolism. Its function is as follows. Catalyzes the reduction of the glycolytic intermediate dihydroxyacetone phosphate (DHAP) to sn-glycerol 3-phosphate (G3P), the key precursor for phospholipid synthesis. The chain is Glycerol-3-phosphate dehydrogenase [NAD(P)+] from Desulfovibrio desulfuricans (strain ATCC 27774 / DSM 6949 / MB).